A 619-amino-acid polypeptide reads, in one-letter code: Translation initiation factor IF-2 (619 aa).

The 170-residue stretch at 120–289 (PRPPIVTIMG…ILLLGEVEGY (170 aa)) folds into the tr-type G domain. Positions 129–136 (GHVDHGKT) are G1. Position 129-136 (129-136 (GHVDHGKT)) interacts with GTP. A G2 region spans residues 154 to 158 (GITQK). The segment at 176 to 179 (DTPG) is G3. Residues 176 to 180 (DTPGH) and 230 to 233 (NKMD) contribute to the GTP site. Positions 230-233 (NKMD) are G4. Positions 266–268 (SAL) are G5.

It belongs to the TRAFAC class translation factor GTPase superfamily. Classic translation factor GTPase family. IF-2 subfamily.

Its subcellular location is the cytoplasm. Functionally, one of the essential components for the initiation of protein synthesis. Protects formylmethionyl-tRNA from spontaneous hydrolysis and promotes its binding to the 30S ribosomal subunits. Also involved in the hydrolysis of GTP during the formation of the 70S ribosomal complex. The sequence is that of Translation initiation factor IF-2 (infB) from Mycoplasma genitalium (strain ATCC 33530 / DSM 19775 / NCTC 10195 / G37) (Mycoplasmoides genitalium).